Reading from the N-terminus, the 787-residue chain is Mitochondrial intermediate peptidase (787 aa).

The transit peptide at 1-36 (MQNKVLRGILFKNVPLGYSYNRSIRHPTFGNSIIRW) directs the protein to the mitochondrion. Histidine 573 is a Zn(2+) binding site. The active site involves glutamate 574. Histidine 577 and histidine 580 together coordinate Zn(2+).

The protein belongs to the peptidase M3 family. Requires Zn(2+) as cofactor.

It is found in the mitochondrion matrix. It catalyses the reaction Release of an N-terminal octapeptide as second stage of processing of some proteins imported into the mitochondrion.. Cleaves proteins, imported into the mitochondrion, to their mature size. While most mitochondrial precursor proteins are processed to the mature form in one step by mitochondrial processing peptidase (MPP), the sequential cleavage by MIP of an octapeptide after initial processing by MPP is a required step for a subgroup of nuclear-encoded precursor proteins destined for the matrix or the inner membrane. The polypeptide is Mitochondrial intermediate peptidase (OCT1) (Vanderwaltozyma polyspora (strain ATCC 22028 / DSM 70294 / BCRC 21397 / CBS 2163 / NBRC 10782 / NRRL Y-8283 / UCD 57-17) (Kluyveromyces polysporus)).